Consider the following 460-residue polypeptide: Fumarate hydratase class II (460 aa).

Residues 95 to 97, 126 to 129, 136 to 138, and Thr-184 contribute to the substrate site; these read SGT, HPND, and SSN. Catalysis depends on His-185, which acts as the Proton donor/acceptor. Ser-315 is a catalytic residue. Residues Ser-316 and 321–323 each bind substrate; that span reads KIN.

It belongs to the class-II fumarase/aspartase family. Fumarase subfamily. As to quaternary structure, homotetramer.

The protein resides in the cytoplasm. It carries out the reaction (S)-malate = fumarate + H2O. It functions in the pathway carbohydrate metabolism; tricarboxylic acid cycle; (S)-malate from fumarate: step 1/1. Functionally, involved in the TCA cycle. Catalyzes the stereospecific interconversion of fumarate to L-malate. This Chlamydia caviae (strain ATCC VR-813 / DSM 19441 / 03DC25 / GPIC) (Chlamydophila caviae) protein is Fumarate hydratase class II.